We begin with the raw amino-acid sequence, 325 residues long: Solute-binding protein RD1_1052 (325 aa).

Positions 1 to 26 (MRLFTKIKGLAAVTCVAALASSAAFA) are cleaved as a signal peptide. D-mannonate is bound by residues Glu75, 93-95 (GES), 148-151 (RGPR), Arg171, and Asn211. L-galactonate-binding positions include Glu75, 93–95 (GES), 148–151 (RGPR), Arg171, and Asn211.

It belongs to the bacterial solute-binding protein 7 family. The complex is comprised of an extracytoplasmic solute-binding protein and a heteromeric permease formed by two transmembrane proteins.

The protein resides in the periplasm. Functionally, solute-binding protein that binds L-galactonate and D-mannonate (in vitro). Probably part of a tripartite ATP-independent periplasmic (TRAP) transport system that mediates solute transport into the cytoplasm. This chain is Solute-binding protein RD1_1052, found in Roseobacter denitrificans (strain ATCC 33942 / OCh 114) (Erythrobacter sp. (strain OCh 114)).